A 224-amino-acid polypeptide reads, in one-letter code: Large ribosomal subunit protein uL4 (224 aa).

A disordered region spans residues A52 to Q109.

The protein belongs to the universal ribosomal protein uL4 family. As to quaternary structure, part of the 50S ribosomal subunit.

One of the primary rRNA binding proteins, this protein initially binds near the 5'-end of the 23S rRNA. It is important during the early stages of 50S assembly. It makes multiple contacts with different domains of the 23S rRNA in the assembled 50S subunit and ribosome. Functionally, forms part of the polypeptide exit tunnel. In Mycobacterium marinum (strain ATCC BAA-535 / M), this protein is Large ribosomal subunit protein uL4.